Consider the following 518-residue polypeptide: Branchpoint-bridging protein (518 aa).

Disordered stretches follow at residues 1–47 (MSAY…KIGK), 94–124 (PSGN…SNTR), 202–241 (AIRG…SGND), and 295–314 (RETK…RPGL). Residues 19–31 (VRGRSEKKVEASH) show a composition bias toward basic and acidic residues. The region spanning 167–233 (YIPVKDYPDI…SNSSLSFSNP (67 aa)) is the KH domain. A compositionally biased stretch (low complexity) spans 225–240 (NSSLSFSNPNLNSSGN). Residues 319 to 336 (LVCKSCGKVGHFARDCKF) form a CCHC-type zinc finger. The tract at residues 337–518 (RGTSDGNNNP…TKNPPPPPPA (182 aa)) is disordered. The segment covering 340-361 (SDGNNNPIVQDQADSYQQTAPY) has biased composition (polar residues). The segment covering 363 to 381 (DSRRQREEEDPRNNGREEI) has biased composition (basic and acidic residues). Pro residues predominate over residues 408–518 (DAPPPPVGLA…TKNPPPPPPA (111 aa)).

Belongs to the BBP/SF1 family.

It is found in the nucleus. In terms of biological role, necessary for the splicing of pre-mRNA. Has a role in the recognition of the branch site (5'-UACUAAC-3'), the pyrimidine tract and the 3'-splice site at the 3'-end of introns. This Debaryomyces hansenii (strain ATCC 36239 / CBS 767 / BCRC 21394 / JCM 1990 / NBRC 0083 / IGC 2968) (Yeast) protein is Branchpoint-bridging protein (BBP).